Reading from the N-terminus, the 358-residue chain is Probable branched-chain-amino-acid aminotransferase (358 aa).

At Lys196 the chain carries N6-(pyridoxal phosphate)lysine.

This sequence belongs to the class-IV pyridoxal-phosphate-dependent aminotransferase family. It depends on pyridoxal 5'-phosphate as a cofactor.

The enzyme catalyses L-leucine + 2-oxoglutarate = 4-methyl-2-oxopentanoate + L-glutamate. It catalyses the reaction L-isoleucine + 2-oxoglutarate = (S)-3-methyl-2-oxopentanoate + L-glutamate. It carries out the reaction L-valine + 2-oxoglutarate = 3-methyl-2-oxobutanoate + L-glutamate. The protein operates within amino-acid biosynthesis; L-isoleucine biosynthesis; L-isoleucine from 2-oxobutanoate: step 4/4. Its pathway is amino-acid biosynthesis; L-leucine biosynthesis; L-leucine from 3-methyl-2-oxobutanoate: step 4/4. It functions in the pathway amino-acid biosynthesis; L-valine biosynthesis; L-valine from pyruvate: step 4/4. Its function is as follows. Acts on leucine, isoleucine and valine. The sequence is that of Probable branched-chain-amino-acid aminotransferase (ilvE) from Staphylococcus aureus (strain MRSA252).